We begin with the raw amino-acid sequence, 65 residues long: Conotoxin Cal16.1 (65 aa).

A signal peptide spans 1-19 (MRCLSIFVLLVLLVSFAVA). The propeptide occupies 20-48 (ELDVEGEIVKQLLTRGTLKDADFWKRLEM). Position 49 is a pyrrolidone carboxylic acid (Gln49). 2 disulfide bridges follow: Cys51–Cys60 and Cys53–Cys61. At Glu63 the chain carries Glutamic acid 1-amide.

In terms of tissue distribution, expressed by the venom duct.

The protein resides in the secreted. Its function is as follows. Probable neurotoxin with unknown target. Possibly targets ion channels. The protein is Conotoxin Cal16.1 of Californiconus californicus (California cone).